The chain runs to 371 residues: Probable RNA 3'-terminal phosphate cyclase-like protein (371 aa).

Belongs to the RNA 3'-terminal cyclase family. Type 2 subfamily. Part of the small subunit (SSU) processome, composed of more than 70 proteins and the RNA chaperone small nucleolar RNA (snoRNA) U3.

The protein localises to the nucleus. It localises to the nucleolus. Its function is as follows. Part of the small subunit (SSU) processome, first precursor of the small eukaryotic ribosomal subunit. During the assembly of the SSU processome in the nucleolus, many ribosome biogenesis factors, an RNA chaperone and ribosomal proteins associate with the nascent pre-rRNA and work in concert to generate RNA folding, modifications, rearrangements and cleavage as well as targeted degradation of pre-ribosomal RNA by the RNA exosome. Does not have cyclase activity. This chain is Probable RNA 3'-terminal phosphate cyclase-like protein (rcl1), found in Dictyostelium discoideum (Social amoeba).